The sequence spans 131 residues: Small ribosomal subunit protein uS8 (131 aa).

The protein belongs to the universal ribosomal protein uS8 family. In terms of assembly, part of the 30S ribosomal subunit. Contacts proteins S5 and S12.

Functionally, one of the primary rRNA binding proteins, it binds directly to 16S rRNA central domain where it helps coordinate assembly of the platform of the 30S subunit. In Wolbachia pipientis subsp. Culex pipiens (strain wPip), this protein is Small ribosomal subunit protein uS8.